A 232-amino-acid chain; its full sequence is MNEFKQLSWQGLWKNNPALVQLLGLCPLLAVTATVTNGLGLGLATTLVLIGSNATVSIIRNLVPNEIRIPIFVMIIAAFVTVVQLLMNAYTYELYQALGIFIPLIVTNCAIIGRAEAYASKNPIGYAAFDGLMMGLGFTVVLVLLGAMRELLGYGTLFAGANLLLGDWATSLKVTIFTTDSPFLLAILPPGAFLGMGLLIAAKNILDKRFERMFAAKQEAKVVQRARVTAET.

The next 6 helical transmembrane spans lie at Ala-18 to Gly-38, Leu-39 to Ile-59, Ile-69 to Ala-89, Glu-93 to Gly-113, Ala-128 to Met-148, and Pro-182 to Ala-202.

The protein belongs to the NqrDE/RnfAE family. The complex is composed of six subunits: RnfA, RnfB, RnfC, RnfD, RnfE and RnfG.

The protein localises to the cell inner membrane. Part of a membrane-bound complex that couples electron transfer with translocation of ions across the membrane. This Pseudoalteromonas atlantica (strain T6c / ATCC BAA-1087) protein is Ion-translocating oxidoreductase complex subunit E.